The following is a 392-amino-acid chain: [Phe13]-bombesin receptor (392 aa).

Topologically, residues 1 to 40 are extracellular; the sequence is MPEGFQSLNQTLPSAISSIAHLESLNDSFILGAKQSEDVS. N-linked (GlcNAc...) asparagine glycosylation is found at asparagine 9 and asparagine 26. Residues 41-62 form a helical membrane-spanning segment; sequence PGLEILALISVTYAVIISVGIL. At 63–81 the chain is on the cytoplasmic side; it reads GNTILIKVFFKIKSMQTVP. The helical transmembrane segment at 82 to 102 threads the bilayer; the sequence is NIFITSLAFGDLLLLLTCVPV. Over 103 to 120 the chain is Extracellular; that stretch reads DASRYIVDTWMFGRAGCK. Cysteines 119 and 202 form a disulfide. Residues 121 to 142 traverse the membrane as a helical segment; the sequence is IISFIQLTSVGVSVFTLTVLSA. Residues 143 to 162 are Cytoplasmic-facing; the sequence is DRYRAIVKPLQLQTSDAVLK. A helical transmembrane segment spans residues 163–183; that stretch reads TCGKAVCVWIISMLLAAPEAV. At 184–219 the chain is on the extracellular side; it reads FSDLYEFGSSEKNTTFEACAPYPVSEKILQETHSLI. Residues 220–240 form a helical membrane-spanning segment; sequence CFLVFYIVPLSIISAYYFLIA. Residues 241–271 are Cytoplasmic-facing; the sequence is KTLYKSTFNMPAEEHTHARKQIESRKRVAKT. Residues 272–292 traverse the membrane as a helical segment; sequence VLVLVALFAVCWLPNHMLYLY. Residues 293–312 are Extracellular-facing; the sequence is RSFTYHSAVNSSAFHLSATI. Residues 313–332 traverse the membrane as a helical segment; it reads FARVLAFSNSCVNPFALYWL. The Cytoplasmic segment spans residues 333-392; the sequence is SRSFRQHFKKQVYCCKTEPPASQQSPTHSSTITGITAVKGNIQMSEISITLLSAYDVKKE. Cysteine 346 carries S-palmitoyl cysteine lipidation.

The protein belongs to the G-protein coupled receptor 1 family. As to expression, expressed only in brain, primarily in cortex and forebrain and at low levels in the midbrain.

The protein resides in the cell membrane. The relative rank potency of bombesin-like peptides for this receptor is [Phe13]bombesin &gt; [Leu13]bombesin &gt; GRP &gt; neuromedin-B. This chain is [Phe13]-bombesin receptor (BB4), found in Bombina orientalis (Oriental fire-bellied toad).